A 196-amino-acid polypeptide reads, in one-letter code: ATP-dependent Clp protease proteolytic subunit (196 aa).

Serine 98 functions as the Nucleophile in the catalytic mechanism. Histidine 123 is an active-site residue.

This sequence belongs to the peptidase S14 family. Fourteen ClpP subunits assemble into 2 heptameric rings which stack back to back to give a disk-like structure with a central cavity, resembling the structure of eukaryotic proteasomes.

The protein localises to the cytoplasm. It carries out the reaction Hydrolysis of proteins to small peptides in the presence of ATP and magnesium. alpha-casein is the usual test substrate. In the absence of ATP, only oligopeptides shorter than five residues are hydrolyzed (such as succinyl-Leu-Tyr-|-NHMec, and Leu-Tyr-Leu-|-Tyr-Trp, in which cleavage of the -Tyr-|-Leu- and -Tyr-|-Trp bonds also occurs).. Its function is as follows. Cleaves peptides in various proteins in a process that requires ATP hydrolysis. Has a chymotrypsin-like activity. Plays a major role in the degradation of misfolded proteins. In Limosilactobacillus fermentum (strain NBRC 3956 / LMG 18251) (Lactobacillus fermentum), this protein is ATP-dependent Clp protease proteolytic subunit.